Reading from the N-terminus, the 378-residue chain is Cytochrome b (378 aa).

The next 4 helical transmembrane spans lie at 34 to 54, 78 to 99, 114 to 134, and 179 to 199; these read FGSLLGLCLIIQILTGLFLAM, WLLRTLHANGASFFFICIYLHV, WLIGVIILFLVMGTAFMGYVL, and FFTFHFILPFIVLAMTMIHLL. Heme b-binding residues include His-84 and His-98. 2 residues coordinate heme b: His-183 and His-197. His-202 is an a ubiquinone binding site. 4 consecutive transmembrane segments (helical) span residues 227–247, 289–309, 321–341, and 348–368; these read FKDIVGFIVMIFILISLVLIS, LGGVIALVLSIAILMILPFYN, INQVMFWSMLVTVILLTWIGA, and YVLIGQILTVVYFLYYLVNPL.

Belongs to the cytochrome b family. In terms of assembly, the main subunits of complex b-c1 are: cytochrome b, cytochrome c1 and the Rieske protein. It depends on heme b as a cofactor.

It is found in the mitochondrion inner membrane. Component of the ubiquinol-cytochrome c reductase complex (complex III or cytochrome b-c1 complex) that is part of the mitochondrial respiratory chain. The b-c1 complex mediates electron transfer from ubiquinol to cytochrome c. Contributes to the generation of a proton gradient across the mitochondrial membrane that is then used for ATP synthesis. This is Cytochrome b (mt:Cyt-b) from Drosophila mauritiana (Fruit fly).